We begin with the raw amino-acid sequence, 753 residues long: Protein-lysine N-methyltransferase SMYD4 (753 aa).

R112–A114 lines the S-adenosyl-L-methionine pocket. Positions D186–G528 constitute an SET domain. Residues C246, C249, C259, C262, C268, C272, H281, and C285 each contribute to the Zn(2+) site. The MYND-type zinc finger occupies C246–C285. S-adenosyl-L-methionine is bound by residues N467–H468 and Y527.

Belongs to the class V-like SAM-binding methyltransferase superfamily.

The protein resides in the nucleus. It is found in the cytoplasm. It catalyses the reaction L-lysyl-[protein] + S-adenosyl-L-methionine = N(6)-methyl-L-lysyl-[protein] + S-adenosyl-L-homocysteine + H(+). Its function is as follows. Protein-lysine N-methyltransferase. Monomethylates PRMT5, modulating its transcriptional activity. May also act as a histone methyltransferase. Plays a critical role in cardiac development. Acts as a key epigenetic regulator of gene expression during cardiac development via its dual activities as a methyltransferase and negative regulator of HDAC1. The protein is Protein-lysine N-methyltransferase SMYD4 (smyd4) of Danio rerio (Zebrafish).